We begin with the raw amino-acid sequence, 365 residues long: MTELKRTPLYEQHRRAGAKLIDFGGWEMPVQYAGVIEEHKAVRSKAGLFDVSHMGEVELKGKDSLAFLQYLLTNDVSRIQDNQIQYSPMCTSAGGVVDDLLVYRYSREHFLLVVNASNTDKDFAWMQAQAEGFEISLENRSGDFAQLALQGPWAEKILQKLTSMDLAQINYYWFKHGEVDGVLCLISRTGYTGEDGFEIYLPPEHAPRMWERILEVGGSEGVQPIGLGARDTLRFEARLPLYGNELGPDITPLEAGLGFFVKLEKDNFIGKEALSAQKEKGVPRKLVGLEMIERGIARSHYPLQKEGKEIGFITSGSFSPTLNKNIALGLIPPEYAQIGETLDVIIRGKAVKARIIPSLFYKRQG.

Belongs to the GcvT family. The glycine cleavage system is composed of four proteins: P, T, L and H.

It catalyses the reaction N(6)-[(R)-S(8)-aminomethyldihydrolipoyl]-L-lysyl-[protein] + (6S)-5,6,7,8-tetrahydrofolate = N(6)-[(R)-dihydrolipoyl]-L-lysyl-[protein] + (6R)-5,10-methylene-5,6,7,8-tetrahydrofolate + NH4(+). In terms of biological role, the glycine cleavage system catalyzes the degradation of glycine. In Desulfitobacterium hafniense (strain DSM 10664 / DCB-2), this protein is Aminomethyltransferase.